A 479-amino-acid polypeptide reads, in one-letter code: Rifampicin monooxygenase (479 aa).

Residues T12, D31, K32, R41, Q98, V122, T156, D278, L291, and N292 each coordinate FAD.

Belongs to the rifampicin monooxygenase family. FAD serves as cofactor.

It catalyses the reaction rifampicin + NADPH + O2 = rifampicin para-naphthoquinone carboxamide + NADP(+) + H2O + H(+). The enzyme catalyses rifampicin + NADH + O2 = rifampicin para-naphthoquinone carboxamide + NAD(+) + H2O + H(+). Monooxygenase that can modify rifampicin, thereby inactivating its antibiotic activity. The protein is Rifampicin monooxygenase of Rhodococcus hoagii (Corynebacterium equii).